We begin with the raw amino-acid sequence, 145 residues long: 3-hydroxyacyl-[acyl-carrier-protein] dehydratase FabZ (145 aa).

The active site involves H48.

Belongs to the thioester dehydratase family. FabZ subfamily.

It localises to the cytoplasm. The enzyme catalyses a (3R)-hydroxyacyl-[ACP] = a (2E)-enoyl-[ACP] + H2O. In terms of biological role, involved in unsaturated fatty acids biosynthesis. Catalyzes the dehydration of short chain beta-hydroxyacyl-ACPs and long chain saturated and unsaturated beta-hydroxyacyl-ACPs. This chain is 3-hydroxyacyl-[acyl-carrier-protein] dehydratase FabZ, found in Cellvibrio japonicus (strain Ueda107) (Pseudomonas fluorescens subsp. cellulosa).